The following is a 460-amino-acid chain: tRNA (guanine(37)-N(1))-methyltransferase (460 aa).

Residues H204, 243–244 (DL), 271–272 (DA), and N292 contribute to the S-adenosyl-L-methionine site. Residues 390–428 (ASTTTTPTTSNTNTSTTTSTTSTSTTTTESTNTNNSANN) show a composition bias toward low complexity. Positions 390 to 460 (ASTTTTPTTS…SIDTNKKLKN (71 aa)) are disordered. The segment covering 442–451 (DSNETNETDS) has biased composition (acidic residues).

Belongs to the class I-like SAM-binding methyltransferase superfamily. TRM5/TYW2 family. As to quaternary structure, monomer.

The protein localises to the mitochondrion matrix. The protein resides in the nucleus. It is found in the cytoplasm. It catalyses the reaction guanosine(37) in tRNA + S-adenosyl-L-methionine = N(1)-methylguanosine(37) in tRNA + S-adenosyl-L-homocysteine + H(+). Its function is as follows. Specifically methylates the N1 position of guanosine-37 in various cytoplasmic and mitochondrial tRNAs. Methylation is not dependent on the nature of the nucleoside 5' of the target nucleoside. This is the first step in the biosynthesis of wybutosine (yW), a modified base adjacent to the anticodon of tRNAs and required for accurate decoding. The sequence is that of tRNA (guanine(37)-N(1))-methyltransferase (trmt5) from Dictyostelium discoideum (Social amoeba).